The primary structure comprises 250 residues: Cellulose biosynthesis protein BcsQ (250 aa).

9-16 (VRGGVGTT) serves as a coordination point for ATP.

This sequence belongs to the BcsQ family.

It localises to the cytoplasm. Its function is as follows. Essential for cellulose biosynthesis, shown for strain 1094, a commensal, natural cellulose producer. Also shown in strain W3110 which has a restored reading frame (TAG stop codon to TTG for amino acid 6, called strain AR3110), this protein. May play a role in subcellular localization of an active cellulose biosynthesis apparatus at the bacterial cell pole. The combination of cellulose and the curli fiber network confer cohesion, elasticity and tissue-like properties to colonies. The chain is Cellulose biosynthesis protein BcsQ from Escherichia coli (strain K12).